Reading from the N-terminus, the 506-residue chain is BTB/POZ domain-containing protein 16 (506 aa).

The region spanning 150–206 (INDPAVTRVAFALALKNLYMNEVEMTVDNVLGVLASAHILQFNRLFRKCVSTMLNRL) is the BTB domain.

This chain is BTB/POZ domain-containing protein 16 (Btbd16), found in Rattus norvegicus (Rat).